Consider the following 304-residue polypeptide: N-acetylmuramic acid 6-phosphate etherase (304 aa).

Positions 57-220 (AVKGLSAGGR…STATMVGLGK (164 aa)) constitute an SIS domain. The active-site Proton donor is the Glu85. Glu116 is a catalytic residue.

The protein belongs to the GCKR-like family. MurNAc-6-P etherase subfamily. Homodimer.

It carries out the reaction N-acetyl-D-muramate 6-phosphate + H2O = N-acetyl-D-glucosamine 6-phosphate + (R)-lactate. It functions in the pathway amino-sugar metabolism; N-acetylmuramate degradation. Its function is as follows. Specifically catalyzes the cleavage of the D-lactyl ether substituent of MurNAc 6-phosphate, producing GlcNAc 6-phosphate and D-lactate. The protein is N-acetylmuramic acid 6-phosphate etherase of Cutibacterium acnes (strain DSM 16379 / KPA171202) (Propionibacterium acnes).